Here is a 74-residue protein sequence, read N- to C-terminus: Large ribosomal subunit protein bL31 (74 aa).

Positions 16, 18, 37, and 40 each coordinate Zn(2+).

This sequence belongs to the bacterial ribosomal protein bL31 family. Type A subfamily. As to quaternary structure, part of the 50S ribosomal subunit. Zn(2+) serves as cofactor.

Its function is as follows. Binds the 23S rRNA. This Nitrosomonas europaea (strain ATCC 19718 / CIP 103999 / KCTC 2705 / NBRC 14298) protein is Large ribosomal subunit protein bL31.